The chain runs to 288 residues: T-cell-interacting, activating receptor on myeloid cells protein 1 (288 aa).

An N-terminal signal peptide occupies residues 1 to 16 (MISRLLSLLCLRLCVG). The Extracellular portion of the chain corresponds to 17-258 (QTDIPENGSP…EGYTVDNLIR (242 aa)). Ig-like C2-type domains lie at 27–113 (PKPS…HPSN) and 124–217 (PQPS…LEIS). Cystine bridges form between Cys49-Cys97 and Cys146-Cys196. Asn74 and Asn185 each carry an N-linked (GlcNAc...) asparagine glycan. Residues 259 to 279 (VGVAAAILLIVGGFLVEAWHS) form a helical membrane-spanning segment. Topologically, residues 280-288 (ERLSPNKPW) are cytoplasmic.

In terms of assembly, interacts with Fc receptor gamma chain FCER1G. In terms of processing, N-glycosylated. Expressed in lung, uterus, lymph nodes, spleen, thymus and bone marrow. Expressed in bone marrow CD11b(+)Gr-1(+) granulocyte precursors and mature neutrophils.

The protein localises to the cell membrane. Its function is as follows. May act as receptor. Negatively regulates TCR-mediated CD4(+) T cell proliferation and activation, possibly by binding an unknown ligand on the T cell surface. Enhances Toll-like receptor-mediated production of pro-inflammatory cytokines by macrophages and neutrophils. The chain is T-cell-interacting, activating receptor on myeloid cells protein 1 (Tarm1) from Mus musculus (Mouse).